A 291-amino-acid chain; its full sequence is Elongation factor Ts (291 aa).

Residues 79–82 (TDFV) are involved in Mg(2+) ion dislocation from EF-Tu.

This sequence belongs to the EF-Ts family.

The protein resides in the cytoplasm. Functionally, associates with the EF-Tu.GDP complex and induces the exchange of GDP to GTP. It remains bound to the aminoacyl-tRNA.EF-Tu.GTP complex up to the GTP hydrolysis stage on the ribosome. The chain is Elongation factor Ts from Anaplasma marginale (strain Florida).